The sequence spans 675 residues: MAANNFATKLSRNTNRITVILVYAFLEWLLMFFIFLNSFFTYFIVKFASFFGLKQVCLLCPKLDRIFERKPENRFTYKELLCQNHIAELASLSFCRTHGKLSESANLCSDCSNREEEQSNIGLGFCTCCQKSLADKPYPNYLLLKSSIWGKTLGDREDGGLILEMIDDDKFGDGFEIDRESYPLGFFRDKAEEGKKQDQQQNGEVISDVESYGLSLREVSEEDGLRSIISNNSPGNEAKSRVSEDEQRNDDTSNVATYGEDQISGRVEEKEEETGVADLLYDQFESKNFTGSQIEEEEEDREETTKELDPETPTSVSTLFNKKLHFLARNEYAAAEDAGDGNVLVSEMDGGDPLRTIERLRETVRAEQEALRDLYAELEEERSASAISANQTMAMITRLQEEKAKVQMEALQYQRMMEEQAEYDQEALQLLNHLMVKREKEKEQLQRELEVYRAKVLEYESKAKNKIIVVENDCEADDDDKEEENREEDNSSEMDVDLEKITLDCVQHMSMLGESLSEFEEERLVILDQLKVLEDRLVTMQDKESAEDPGEFSNSYEEASNGHGGLTMASMAKSLLPLLDAAENESEDGSQGLPESDEKNFGSDSEKLEIIKQVDSVYERLQELETDGEFLKNCMSSAKKGDKGTDILKDILQHLRDLRTIELTNTIENQTTQEE.

Residues 17–37 traverse the membrane as a helical segment; it reads ITVILVYAFLEWLLMFFIFLN. Disordered regions lie at residues 225-274 and 286-315; these read LRSI…EEET and SKNF…TPTS. Over residues 238–251 the composition is skewed to basic and acidic residues; the sequence is AKSRVSEDEQRNDD. Residues 355–453 enclose the GTD-binding domain; that stretch reads RTIERLRETV…QLQRELEVYR (99 aa). Residues 474 to 496 show a composition bias toward acidic residues; sequence CEADDDDKEEENREEDNSSEMDV. Disordered regions lie at residues 474–497, 542–565, and 582–605; these read CEAD…MDVD, DKES…GHGG, and AENE…GSDS. Basic and acidic residues predominate over residues 596–605; that stretch reads SDEKNFGSDS. A coiled-coil region spans residues 605–633; the sequence is SEKLEIIKQVDSVYERLQELETDGEFLKN.

In terms of assembly, interacts with myosin XI-K.

Its subcellular location is the membrane. Its function is as follows. Membrane-anchored myosin receptors that define a distinct, plant-specific transport vesicle compartment. This chain is Myosin-binding protein 3, found in Arabidopsis thaliana (Mouse-ear cress).